A 103-amino-acid polypeptide reads, in one-letter code: Carboxysome shell protein CcmK3 (103 aa).

A BMC domain is found at alanine 4 to proline 91.

Belongs to the bacterial microcompartments protein family. CcmK subfamily. In terms of assembly, forms mixed heterohexamers with CcmK4, probably with 1:5 CcmK3:CcmK4 stoichiometry. Only very weak interactions with CcmK1 and CcmK2 were seen. Bulky residues in the pore region probably preclude the formation of homohexamers by this subunit.

The protein localises to the carboxysome. Functionally, a probably minor shell protein component of the carboxysome, a polyhedral inclusion where RuBisCO (ribulose bisphosphate carboxylase, rbcL-rbcS) is sequestered. This subunit probably does not form homohexamers. This chain is Carboxysome shell protein CcmK3, found in Synechocystis sp. (strain ATCC 27184 / PCC 6803 / Kazusa).